Here is a 668-residue protein sequence, read N- to C-terminus: DNA ligase (668 aa).

NAD(+)-binding positions include 37–41, 86–87, and Glu-116; these read DAIYD and SL. The active-site N6-AMP-lysine intermediate is the Lys-118. The NAD(+) site is built by Arg-139, Glu-176, Lys-289, and Lys-313. 4 residues coordinate Zn(2+): Cys-407, Cys-410, Cys-425, and Cys-430. Residues 586 to 668 form the BRCT domain; the sequence is AQSSALAGLT…RALIETREMP (83 aa).

Belongs to the NAD-dependent DNA ligase family. LigA subfamily. The cofactor is Mg(2+). Requires Mn(2+) as cofactor.

It carries out the reaction NAD(+) + (deoxyribonucleotide)n-3'-hydroxyl + 5'-phospho-(deoxyribonucleotide)m = (deoxyribonucleotide)n+m + AMP + beta-nicotinamide D-nucleotide.. DNA ligase that catalyzes the formation of phosphodiester linkages between 5'-phosphoryl and 3'-hydroxyl groups in double-stranded DNA using NAD as a coenzyme and as the energy source for the reaction. It is essential for DNA replication and repair of damaged DNA. The polypeptide is DNA ligase (Gloeobacter violaceus (strain ATCC 29082 / PCC 7421)).